Consider the following 289-residue polypeptide: Formamidopyrimidine-DNA glycosylase (289 aa).

Pro-2 (schiff-base intermediate with DNA) is an active-site residue. The Proton donor role is filled by Glu-3. The active-site Proton donor; for beta-elimination activity is Lys-61. Positions 96, 115, and 161 each coordinate DNA. An FPG-type zinc finger spans residues 247–281 (SAYGQEDRPCPRCGTAIRREKFMNRSSFSCPKCQR). The active-site Proton donor; for delta-elimination activity is the Arg-271.

The protein belongs to the FPG family. In terms of assembly, monomer. Zn(2+) serves as cofactor.

The catalysed reaction is Hydrolysis of DNA containing ring-opened 7-methylguanine residues, releasing 2,6-diamino-4-hydroxy-5-(N-methyl)formamidopyrimidine.. It catalyses the reaction 2'-deoxyribonucleotide-(2'-deoxyribose 5'-phosphate)-2'-deoxyribonucleotide-DNA = a 3'-end 2'-deoxyribonucleotide-(2,3-dehydro-2,3-deoxyribose 5'-phosphate)-DNA + a 5'-end 5'-phospho-2'-deoxyribonucleoside-DNA + H(+). Functionally, involved in base excision repair of DNA damaged by oxidation or by mutagenic agents. Acts as a DNA glycosylase that recognizes and removes damaged bases. Has a preference for oxidized purines, such as 7,8-dihydro-8-oxoguanine (8-oxoG). Has AP (apurinic/apyrimidinic) lyase activity and introduces nicks in the DNA strand. Cleaves the DNA backbone by beta-delta elimination to generate a single-strand break at the site of the removed base with both 3'- and 5'-phosphates. The polypeptide is Formamidopyrimidine-DNA glycosylase (Rhodococcus opacus (strain B4)).